A 138-amino-acid chain; its full sequence is Glia maturation factor (138 aa).

The 136-residue stretch at 3–138 folds into the ADF-H domain; sequence DNQICDISNE…TEEWLKAKLK (136 aa).

Belongs to the actin-binding proteins ADF family. GMF subfamily. As to expression, in ovaries, expressed in follicular epithelium, in polar cells, migrating border cells, and centripedal cells (at protein level).

The protein resides in the cell projection. It localises to the lamellipodium. It is found in the cytoplasm. The protein localises to the perinuclear region. Its subcellular location is the nucleus. The protein resides in the cell cortex. Inhibits Arp2/3-mediated actin nucleation. Together with flr, promotes Arp2/3-nucleated actin filament array disassembly. Promotes debranching. Regulates lamellipodial protrusion dynamics possibly by facilitating lamellipodial retraction. In egg chambers, enhances the retraction dynamics of cellular extensions in border cells and thus together with flr plays an important role in directional migration of border cell clusters. This chain is Glia maturation factor, found in Drosophila melanogaster (Fruit fly).